The chain runs to 147 residues: Mediator of RNA polymerase II transcription subunit 10 (147 aa).

This sequence belongs to the Mediator complex subunit 10 family. Component of the Mediator complex.

The protein localises to the nucleus. Component of the Mediator complex, a coactivator involved in the regulated transcription of nearly all RNA polymerase II-dependent genes. Mediator functions as a bridge to convey information from gene-specific regulatory proteins to the basal RNA polymerase II transcription machinery. Mediator is recruited to promoters by direct interactions with regulatory proteins and serves as a scaffold for the assembly of a functional preinitiation complex with RNA polymerase II and the general transcription factors. In Debaryomyces hansenii (strain ATCC 36239 / CBS 767 / BCRC 21394 / JCM 1990 / NBRC 0083 / IGC 2968) (Yeast), this protein is Mediator of RNA polymerase II transcription subunit 10 (NUT2).